The sequence spans 374 residues: 2-aminoethylphosphonate--pyruvate transaminase 1 (374 aa).

The residue at position 195 (K195) is an N6-(pyridoxal phosphate)lysine.

The protein belongs to the class-V pyridoxal-phosphate-dependent aminotransferase family. PhnW subfamily. Homodimer. Requires pyridoxal 5'-phosphate as cofactor.

It carries out the reaction (2-aminoethyl)phosphonate + pyruvate = phosphonoacetaldehyde + L-alanine. Its function is as follows. Involved in phosphonate degradation. The polypeptide is 2-aminoethylphosphonate--pyruvate transaminase 1 (Polaromonas sp. (strain JS666 / ATCC BAA-500)).